The sequence spans 398 residues: DNA-directed RNA polymerase III subunit RPC4 (398 aa).

Positions 1-149 are disordered; sequence MSEGNAAGEP…IKKEKRETDE (149 aa). An N-acetylserine modification is found at Ser2. Ser42 carries the phosphoserine modification. 3 stretches are compositionally biased toward basic and acidic residues: residues 66 to 100, 116 to 128, and 140 to 149; these read KIKE…RGRP, MMKK…KTVD, and IKKEKRETDE. Glycyl lysine isopeptide (Lys-Gly) (interchain with G-Cter in SUMO2) cross-links involve residues Lys68 and Lys78. Residues Arg95, Arg97, and Arg99 each carry the omega-N-methylarginine modification. Residues Lys141, Lys152, Lys160, Lys190, Lys199, Lys206, Lys220, Lys285, Lys302, and Lys396 each participate in a glycyl lysine isopeptide (Lys-Gly) (interchain with G-Cter in SUMO2) cross-link. Residues 191 to 244 are disordered; that stretch reads EESEEPEAKPFSAGPKEEDMEVDVPAVKVKEEPRDEEEEAKVKAPPRAARKTPG.

This sequence belongs to the eukaryotic RPC4/POLR3D RNA polymerase subunit family. As to quaternary structure, component of the RNA polymerase III complex consisting of 17 subunits: a ten-subunit horseshoe-shaped catalytic core composed of POLR3A/RPC1, POLR3B/RPC2, POLR1C/RPAC1, POLR1D/RPAC2, POLR3K/RPC10, POLR2E/RPABC1, POLR2F/RPABC2, POLR2H/RPABC3, POLR2K/RPABC4 and POLR2L/RPABC5; a mobile stalk composed of two subunits POLR3H/RPC8 and CRCP/RPC9, protruding from the core and functioning primarily in transcription initiation; and additional subunits homologous to general transcription factors of the RNA polymerase II machinery, POLR3C/RPC3-POLR3F/RPC6-POLR3G/RPC7 heterotrimer required for transcription initiation and POLR3D/RPC4-POLR3E/RPC5 heterodimer involved in both transcription initiation and termination. Sumoylation on Lys-141 can serve as a signal to mark misfolded Pol III for proteasomal degradation.

The protein resides in the nucleus. In terms of biological role, DNA-dependent RNA polymerase catalyzes the transcription of DNA into RNA using the four ribonucleoside triphosphates as substrates. Specific peripheric component of RNA polymerase III (Pol III) which synthesizes small non-coding RNAs including 5S rRNA, snRNAs, tRNAs and miRNAs from at least 500 distinct genomic loci. Enables recruitment of Pol III at transcription initiation site and drives transcription initiation from both type 2 and type 3 DNA promoters. Required for efficient transcription termination and reinitiation. Pol III plays a key role in sensing and limiting infection by intracellular bacteria and DNA viruses. Acts as nuclear and cytosolic DNA sensor involved in innate immune response. Can sense non-self dsDNA that serves as template for transcription into dsRNA. The non-self RNA polymerase III transcripts, such as Epstein-Barr virus-encoded RNAs (EBERs) induce type I interferon and NF-kappa-B through the RIG-I pathway. The polypeptide is DNA-directed RNA polymerase III subunit RPC4 (Mus musculus (Mouse)).